A 280-amino-acid polypeptide reads, in one-letter code: Elongation factor Ts (280 aa).

The involved in Mg(2+) ion dislocation from EF-Tu stretch occupies residues T79 to V82.

The protein belongs to the EF-Ts family.

The protein resides in the cytoplasm. Functionally, associates with the EF-Tu.GDP complex and induces the exchange of GDP to GTP. It remains bound to the aminoacyl-tRNA.EF-Tu.GTP complex up to the GTP hydrolysis stage on the ribosome. This Vibrio vulnificus (strain CMCP6) protein is Elongation factor Ts.